A 352-amino-acid polypeptide reads, in one-letter code: DNA integrity scanning protein DisA (352 aa).

Positions 3–143 (PQELIEKIKL…NYKYVVNQVD (141 aa)) constitute a DAC domain. ATP is bound by residues Gly-71, Leu-89, and 102 to 106 (TRHRT).

The protein belongs to the DisA family. In terms of assembly, homooctamer. Mg(2+) serves as cofactor.

It carries out the reaction 2 ATP = 3',3'-c-di-AMP + 2 diphosphate. Its function is as follows. Participates in a DNA-damage check-point. DisA forms globular foci that rapidly scan along the chromosomes searching for lesions. Also has diadenylate cyclase activity, catalyzing the condensation of 2 ATP molecules into cyclic di-AMP (c-di-AMP). c-di-AMP likely acts as a signaling molecule that may couple DNA integrity with a cellular process. This is DNA integrity scanning protein DisA from Thermotoga neapolitana (strain ATCC 49049 / DSM 4359 / NBRC 107923 / NS-E).